The following is a 131-amino-acid chain: Small ribosomal subunit protein uS8 (131 aa).

This sequence belongs to the universal ribosomal protein uS8 family. In terms of assembly, part of the 30S ribosomal subunit. Contacts proteins S5 and S12.

Functionally, one of the primary rRNA binding proteins, it binds directly to 16S rRNA central domain where it helps coordinate assembly of the platform of the 30S subunit. The chain is Small ribosomal subunit protein uS8 from Chlorobium phaeovibrioides (strain DSM 265 / 1930) (Prosthecochloris vibrioformis (strain DSM 265)).